We begin with the raw amino-acid sequence, 314 residues long: DegV domain-containing protein XAC3508 (314 aa).

In terms of domain architecture, DegV spans 3–307 (IGIVVDSACD…KGALAVGFAA (305 aa)). Hexadecanoate is bound by residues threonine 63 and serine 96.

In terms of biological role, may bind long-chain fatty acids, such as palmitate, and may play a role in lipid transport or fatty acid metabolism. This is DegV domain-containing protein XAC3508 from Xanthomonas axonopodis pv. citri (strain 306).